A 280-amino-acid chain; its full sequence is Ribosomal RNA small subunit methyltransferase A (280 aa).

Residues His15, Leu17, Gly42, Glu64, Asp89, and Asn109 each coordinate S-adenosyl-L-methionine.

Belongs to the class I-like SAM-binding methyltransferase superfamily. rRNA adenine N(6)-methyltransferase family. RsmA subfamily.

It is found in the cytoplasm. It catalyses the reaction adenosine(1518)/adenosine(1519) in 16S rRNA + 4 S-adenosyl-L-methionine = N(6)-dimethyladenosine(1518)/N(6)-dimethyladenosine(1519) in 16S rRNA + 4 S-adenosyl-L-homocysteine + 4 H(+). Functionally, specifically dimethylates two adjacent adenosines (A1518 and A1519) in the loop of a conserved hairpin near the 3'-end of 16S rRNA in the 30S particle. May play a critical role in biogenesis of 30S subunits. This Synechococcus sp. (strain WH7803) protein is Ribosomal RNA small subunit methyltransferase A.